Reading from the N-terminus, the 221-residue chain is Urease accessory protein UreG (221 aa).

19–26 (GPVGSGKT) contributes to the GTP binding site.

It belongs to the SIMIBI class G3E GTPase family. UreG subfamily. Homodimer. UreD, UreF and UreG form a complex that acts as a GTP-hydrolysis-dependent molecular chaperone, activating the urease apoprotein by helping to assemble the nickel containing metallocenter of UreC. The UreE protein probably delivers the nickel.

The protein resides in the cytoplasm. Facilitates the functional incorporation of the urease nickel metallocenter. This process requires GTP hydrolysis, probably effectuated by UreG. Its function is as follows. Expression of the urease operon increases the likelihood of bacterial survival by contributing to acid resistance in vitro and in vivo in BALB/c mice. Y.enterocolitica enters the body via an oral path and must survive the acidic stomach before being able to colonize the intestinal mucosa. This chain is Urease accessory protein UreG, found in Yersinia enterocolitica.